Here is a 379-residue protein sequence, read N- to C-terminus: Succinyl-diaminopimelate desuccinylase (379 aa).

Residue histidine 70 coordinates Zn(2+). The active site involves aspartate 72. Aspartate 103 provides a ligand contact to Zn(2+). The active-site Proton acceptor is the glutamate 137. Zn(2+) contacts are provided by glutamate 138, glutamate 166, and histidine 352.

The protein belongs to the peptidase M20A family. DapE subfamily. Homodimer. Zn(2+) serves as cofactor. It depends on Co(2+) as a cofactor.

The catalysed reaction is N-succinyl-(2S,6S)-2,6-diaminopimelate + H2O = (2S,6S)-2,6-diaminopimelate + succinate. It participates in amino-acid biosynthesis; L-lysine biosynthesis via DAP pathway; LL-2,6-diaminopimelate from (S)-tetrahydrodipicolinate (succinylase route): step 3/3. Functionally, catalyzes the hydrolysis of N-succinyl-L,L-diaminopimelic acid (SDAP), forming succinate and LL-2,6-diaminopimelate (DAP), an intermediate involved in the bacterial biosynthesis of lysine and meso-diaminopimelic acid, an essential component of bacterial cell walls. In Burkholderia ambifaria (strain ATCC BAA-244 / DSM 16087 / CCUG 44356 / LMG 19182 / AMMD) (Burkholderia cepacia (strain AMMD)), this protein is Succinyl-diaminopimelate desuccinylase.